A 137-amino-acid polypeptide reads, in one-letter code: Large ribosomal subunit protein uL16 (137 aa).

It belongs to the universal ribosomal protein uL16 family. In terms of assembly, part of the 50S ribosomal subunit.

Functionally, binds 23S rRNA and is also seen to make contacts with the A and possibly P site tRNAs. The chain is Large ribosomal subunit protein uL16 from Endomicrobium trichonymphae.